Reading from the N-terminus, the 134-residue chain is Small ribosomal subunit protein uS8c (134 aa).

Belongs to the universal ribosomal protein uS8 family. In terms of assembly, part of the 30S ribosomal subunit.

Its subcellular location is the plastid. The protein localises to the chloroplast. Its function is as follows. One of the primary rRNA binding proteins, it binds directly to 16S rRNA central domain where it helps coordinate assembly of the platform of the 30S subunit. The chain is Small ribosomal subunit protein uS8c (rps8) from Populus alba (White poplar).